The chain runs to 561 residues: Oligo-1,6-glucosidase (561 aa).

Asp199 acts as the Nucleophile in catalysis. Glu256 serves as the catalytic Proton donor.

The protein belongs to the glycosyl hydrolase 13 family.

The protein resides in the cytoplasm. The catalysed reaction is Hydrolysis of (1-&gt;6)-alpha-D-glucosidic linkages in some oligosaccharides produced from starch and glycogen by alpha-amylase, and in isomaltose.. The sequence is that of Oligo-1,6-glucosidase (malL) from Halalkalibacterium halodurans (strain ATCC BAA-125 / DSM 18197 / FERM 7344 / JCM 9153 / C-125) (Bacillus halodurans).